Reading from the N-terminus, the 155-residue chain is FHA domain-containing protein FhaB (155 aa).

Residues 6-28 (LQLTRVGFLLLLWLFIWSVLRIL) form a helical membrane-spanning segment. Thr36 bears the Phosphothreonine mark. One can recognise an FHA domain in the interval 83-132 (VLIGRADDSTLVLTDDYASTRHARLSPRGSEWYVEDLGSTNGTYLDRAKV).

Post-translationally, phosphorylated by PknB. Dephosphorylated by PstP.

It localises to the cell membrane. In Mycolicibacterium smegmatis (strain ATCC 700084 / mc(2)155) (Mycobacterium smegmatis), this protein is FHA domain-containing protein FhaB (fhaB).